We begin with the raw amino-acid sequence, 844 residues long: 3',5'-cyclic-AMP phosphodiesterase 4A (844 aa).

The segment at 1–124 (MEPPAAPSER…RSPLDSQASP (124 aa)) is disordered. Position 13 is a phosphoserine (Ser-13). Positions 36–46 (QPRTPIRIQQR) are enriched in low complexity. Residues 51–78 (SAERSETERSPHRPIERADAVDTGDRPG) are compositionally biased toward basic and acidic residues. The span at 82 to 91 (TRMSWPSSFH) shows a compositional bias: polar residues. Ser-147 carries the phosphoserine; by MAPKAPK2 modification. Phosphoserine occurs at positions 152, 160, and 204. A disordered region spans residues 296-317 (PSPTPRQRAFQQPPPSVLRQSQ). Ser-333 bears the Phosphoserine mark. Residues 343 to 672 (VKTDQEDLLA…DWYHSAIRQS (330 aa)) enclose the PDEase domain. Lys-344 participates in a covalent cross-link: Glycyl lysine isopeptide (Lys-Gly) (interchain with G-Cter in SUMO). His-419 serves as the catalytic Proton donor. His-419 provides a ligand contact to 3',5'-cyclic AMP. AMP contacts are provided by His-419 and His-423. The Zn(2+) site is built by His-423, His-459, Asp-460, and Asp-577. Asp-460, Asp-577, Gln-628, and Phe-631 together coordinate AMP. Asp-460 contributes to the Mg(2+) binding site. Residue Asp-460 participates in Mn(2+) binding. 2 residues coordinate 3',5'-cyclic AMP: Gln-628 and Phe-631. 2 disordered regions span residues 668 to 690 (AIRQSPSPPLEEEPGGLGHPSLP) and 818 to 844 (SACSGTSGDNSAIISAPGRWGSGGDPA). 2 positions are modified to phosphoserine: Ser-672 and Ser-674. Residues 820–830 (CSGTSGDNSAI) are compositionally biased toward polar residues.

Belongs to the cyclic nucleotide phosphodiesterase family. PDE4 subfamily. Interacts with LYN (via SH3 domain). Interacts with ARRB2. Zn(2+) serves as cofactor. It depends on Mg(2+) as a cofactor. Requires Mn(2+) as cofactor. In terms of processing, phosphorylated by MAPKAPK2 at Ser-147; it counteracts PKA-induced activation of PDE4A and modulates intracellular cAMP levels. Likely involved in cellular desensitization to cAMP signaling. Proteolytically cleaved by CASP3. In terms of tissue distribution, isoform 2 is testis specific.

The protein localises to the cytoplasm. It localises to the cytosol. It is found in the membrane. The catalysed reaction is 3',5'-cyclic AMP + H2O = AMP + H(+). It functions in the pathway purine metabolism; 3',5'-cyclic AMP degradation; AMP from 3',5'-cyclic AMP: step 1/1. Inhibited by rolipram. Functionally, hydrolyzes the second messenger 3',5'-cyclic AMP (cAMP), which is a key regulator of many important physiological processes. Its function is as follows. Efficiently hydrolyzes cAMP. In Rattus norvegicus (Rat), this protein is 3',5'-cyclic-AMP phosphodiesterase 4A (Pde4a).